A 231-amino-acid chain; its full sequence is 2-C-methyl-D-erythritol 4-phosphate cytidylyltransferase (231 aa).

Belongs to the IspD/TarI cytidylyltransferase family. IspD subfamily.

The catalysed reaction is 2-C-methyl-D-erythritol 4-phosphate + CTP + H(+) = 4-CDP-2-C-methyl-D-erythritol + diphosphate. The protein operates within isoprenoid biosynthesis; isopentenyl diphosphate biosynthesis via DXP pathway; isopentenyl diphosphate from 1-deoxy-D-xylulose 5-phosphate: step 2/6. Its function is as follows. Catalyzes the formation of 4-diphosphocytidyl-2-C-methyl-D-erythritol from CTP and 2-C-methyl-D-erythritol 4-phosphate (MEP). In Fusobacterium nucleatum subsp. nucleatum (strain ATCC 25586 / DSM 15643 / BCRC 10681 / CIP 101130 / JCM 8532 / KCTC 2640 / LMG 13131 / VPI 4355), this protein is 2-C-methyl-D-erythritol 4-phosphate cytidylyltransferase.